Consider the following 285-residue polypeptide: Lipoyl synthase (285 aa).

[4Fe-4S] cluster is bound by residues cysteine 36, cysteine 41, cysteine 47, cysteine 62, cysteine 66, cysteine 69, and serine 275. In terms of domain architecture, Radical SAM core spans 48-264 (FSKKTATFLI…KEYAISIGFK (217 aa)).

This sequence belongs to the radical SAM superfamily. Lipoyl synthase family. The cofactor is [4Fe-4S] cluster.

Its subcellular location is the cytoplasm. The enzyme catalyses [[Fe-S] cluster scaffold protein carrying a second [4Fe-4S](2+) cluster] + N(6)-octanoyl-L-lysyl-[protein] + 2 oxidized [2Fe-2S]-[ferredoxin] + 2 S-adenosyl-L-methionine + 4 H(+) = [[Fe-S] cluster scaffold protein] + N(6)-[(R)-dihydrolipoyl]-L-lysyl-[protein] + 4 Fe(3+) + 2 hydrogen sulfide + 2 5'-deoxyadenosine + 2 L-methionine + 2 reduced [2Fe-2S]-[ferredoxin]. It functions in the pathway protein modification; protein lipoylation via endogenous pathway; protein N(6)-(lipoyl)lysine from octanoyl-[acyl-carrier-protein]: step 2/2. Catalyzes the radical-mediated insertion of two sulfur atoms into the C-6 and C-8 positions of the octanoyl moiety bound to the lipoyl domains of lipoate-dependent enzymes, thereby converting the octanoylated domains into lipoylated derivatives. This is Lipoyl synthase from Caldicellulosiruptor saccharolyticus (strain ATCC 43494 / DSM 8903 / Tp8T 6331).